A 799-amino-acid polypeptide reads, in one-letter code: Integrin beta-1 (799 aa).

Positions 1–20 (MNLQLVFWIGLISLICSVFG) are cleaved as a signal peptide. Topologically, residues 21–729 (QTDKNRCLKA…ETPDCPTGPD (709 aa)) are extracellular. Residues 26–76 (RCLKANAKSCGECIQAGPNCGWCTNTTFLQEGMPTSARCDDLEALKKKGCH) form the PSI domain. Cystine bridges form between Cys27/Cys45, Cys35/Cys465, Cys38/Cys64, Cys48/Cys75, Cys207/Cys213, Cys261/Cys301, Cys401/Cys415, Cys435/Cys463, Cys467/Cys487, Cys478/Cys490, Cys492/Cys501, Cys503/Cys534, Cys517/Cys532, Cys526/Cys537, Cys539/Cys554, Cys556/Cys577, Cys561/Cys575, Cys569/Cys580, Cys582/Cys591, Cys593/Cys616, Cys600/Cys614, Cys608/Cys619, Cys621/Cys631, Cys634/Cys637, Cys641/Cys692, Cys647/Cys666, Cys650/Cys662, and Cys700/Cys724. N-linked (GlcNAc...) asparagine glycosylation is found at Asn50, Asn94, and Asn97. The region spanning 140–378 (DYPIDLYYLM…QLIIDAYNSL (239 aa)) is the VWFA domain. Residues Ser152 and Ser154 each coordinate Mg(2+). Ser154, Asp157, Asp158, and Glu189 together coordinate Ca(2+). Residues 207–213 (CTSEQNC) form a CX3CL1-binding region. Asn212 carries an N-linked (GlcNAc...) asparagine glycan. Ca(2+)-binding residues include Asn244, Asp246, Pro248, and Glu249. Residue Glu249 participates in Mg(2+) binding. Asn269 carries N-linked (GlcNAc...) asparagine glycosylation. Positions 295–314 (LPNDGQCHLENNVYTMSHYY) are CX3CL1-binding. Ca(2+) is bound at residue Gly362. Asn363, Asn406, and Asn417 each carry an N-linked (GlcNAc...) asparagine glycan. Positions 383-466 (ILENSKLPDG…VVLQFICKCN (84 aa)) are interaction with TMEM182. I-EGF domains lie at 467–502 (CQSH…RHCE), 503–555 (CSTD…KFCE), 556–592 (CDNF…SACD), and 593–632 (CSLD…PTCE). Residue Asn482 is glycosylated (N-linked (GlcNAc...) asparagine). N-linked (GlcNAc...) asparagine glycosylation occurs at Asn521. N-linked (GlcNAc...) asparagine glycosylation is present at Asn585. A glycan (N-linked (GlcNAc...) asparagine) is linked at Asn670. Residues 730 to 752 (IIPIVAGVVAGIVLIGLALLLIW) form a helical membrane-spanning segment. The Cytoplasmic portion of the chain corresponds to 753–799 (KLLMIIHDRREFAKFEKEKMNAKWDTGENPIYKSAVTTVVNPKYEGK). The interval 763–768 (EFAKFE) is signal for sorting from recycling endosomes; interaction with ACAP1. The residue at position 778 (Thr778) is a Phosphothreonine. Tyr784 bears the Phosphotyrosine mark. Ser786 carries the phosphoserine modification. The interaction with ITGB1BP1 stretch occupies residues 786 to 793 (SAVTTVVN). Thr790 carries the phosphothreonine modification. An N6-acetyllysine; alternate modification is found at Lys795. A Glycyl lysine isopeptide (Lys-Gly) (interchain with G-Cter in SUMO1); alternate cross-link involves residue Lys795.

The protein belongs to the integrin beta chain family. Interacts with seprase FAP (seprase); the interaction occurs at the cell surface of invadopodia membrane in a collagen-dependent manner. Heterodimer of an alpha and a beta subunit. Beta-1 associates with either alpha-1, alpha-2, alpha-3, alpha-4, alpha-5, alpha-6, alpha-7, alpha-8, alpha-9, alpha-10, alpha-11 or alpha-V. ITGA6:ITGB1 is found in a complex with CD9; interaction takes place in oocytes and is involved in sperm-egg fusion. Binds LGALS3BP and NMRK2, when associated with alpha-7, but not with alpha-5. Interacts with FLNA, FLNB, FLNC and RANBP9. Interacts with KRT1 in the presence of RACK1 and SRC. Interacts with JAML; integrin alpha-4/beta-1 may regulate leukocyte to endothelial cells adhesion by controlling JAML homodimerization. Interacts with RAB21. Interacts (via the cytoplasmic region) with RAB25 (via the hypervariable C-terminal region). Interacts with MYO10. Interacts with ITGB1BP1 (via C-terminal region); the interaction is a prerequisite for focal adhesion disassembly. Interacts with TLN1; the interaction is prevented by competitive binding of ITGB1BP1. Interacts with ACAP1; required for ITGB1 recycling. Interacts with ASAP3. Interacts with FERMT2; the interaction is inhibited in presence of ITGB1BP1. Interacts with DAB2. Interacts with FGR and HCK. Interacts with alpha-7A and alpha-7B in adult skeletal muscle. Interacts with alpha-7B in cardiomyocytes of adult heart. Interacts with EMP2; the interaction may be direct or indirect and ITGB1 has a heterodimer form. ITGA5:ITGB1 interacts with CCN3. ITGA4:ITGB1 is found in a ternary complex with CX3CR1 and CX3CL1. ITGA5:ITGB1 interacts with FBN1. ITGA5:ITGB1 acts as a receptor for fibronectin FN1 and mediates R-G-D-dependent cell adhesion to FN1. ITGA5:ITGB1 interacts with IL1B. Interacts with MDK. ITGA4:ITGB1 interacts with MDK; this interaction mediates MDK-induced osteoblast cells migration through PXN phosphorylation. ITGA6:ITGB1 interacts with MDK; this interaction mediates MDK-induced neurite-outgrowth. ITGA5:ITGB1 interacts with ACE2. Interacts with TMEM182 and LAMB1. Interacts with tensin TNS3; TNS3 also interacts with PEAK1, thus acting as an adapter molecule to bridge the association of PEAK1 with ITGB1. Interacts with tensin TNS4; the interaction displaces tensin TNS3 from the ITGB1 cytoplasmic tail and promotes ITGB1 stability. Integrin ITGA9:ITGB1 interacts with SPP1/OPN (via N-terminus). Integrin ITGA9:ITGB1 interacts with TNC/TNFN3 (via the 3rd Fibronectin type-III domain). Integrins ITGA4:ITGB1 and ITGA9:ITGB1 interact with SVEP1 (via Sushi domain 21); thereby inhibit Ca(2+) intracellular signaling and as a result repress vasocontraction. ITGA4:ITGB1 and ITGA5:ITGB1 interacts with SELP. ITGA5:ITGB1 interacts with IGFBP1. ITGA4:ITGB1 interacts with BCAM. Interacts with ADGRG6.

It localises to the cell membrane. It is found in the cell projection. The protein localises to the invadopodium membrane. The protein resides in the ruffle membrane. Its subcellular location is the recycling endosome. It localises to the melanosome. It is found in the lamellipodium. The protein localises to the ruffle. The protein resides in the cell junction. Its subcellular location is the focal adhesion. Functionally, integrins alpha-1/beta-1, alpha-2/beta-1, alpha-10/beta-1 and alpha-11/beta-1 are receptors for collagen. Integrins alpha-1/beta-1 and alpha-2/beta-2 recognize the proline-hydroxylated sequence G-F-P-G-E-R in collagen. Integrins alpha-2/beta-1, alpha-3/beta-1, alpha-4/beta-1, alpha-5/beta-1, alpha-8/beta-1, alpha-10/beta-1, alpha-11/beta-1 and alpha-V/beta-1 are receptors for fibronectin. Alpha-4/beta-1 recognizes one or more domains within the alternatively spliced CS-1 and CS-5 regions of fibronectin. Integrin alpha-5/beta-1 is a receptor for fibrinogen. Integrin alpha-1/beta-1, alpha-2/beta-1, alpha-6/beta-1 and alpha-7/beta-1 are receptors for lamimin. Integrin alpha-6/beta-1 (ITGA6:ITGB1) is present in oocytes and is involved in sperm-egg fusion. Integrin alpha-4/beta-1 is a receptor for VCAM1 and recognizes the sequence Q-I-D-S in VCAM1. Integrin alpha-9/beta-1 is a receptor for VCAM1, cytotactin and osteopontin. It recognizes the sequence A-E-I-D-G-I-E-L in cytotactin. Integrin alpha-3/beta-1 is a receptor for epiligrin, thrombospondin and CSPG4. Integrin alpha-3/beta-1 provides a docking site for FAP (seprase) at invadopodia plasma membranes in a collagen-dependent manner and hence may participate in the adhesion, formation of invadopodia and matrix degradation processes, promoting cell invasion. Alpha-3/beta-1 may mediate with LGALS3 the stimulation by CSPG4 of endothelial cells migration. Integrin alpha-V/beta-1 is a receptor for vitronectin. Beta-1 integrins recognize the sequence R-G-D in a wide array of ligands. When associated with alpha-7/beta-1 integrin, regulates cell adhesion and laminin matrix deposition. Involved in promoting endothelial cell motility and angiogenesis. Involved in osteoblast compaction through the fibronectin fibrillogenesis cell-mediated matrix assembly process and the formation of mineralized bone nodules. May be involved in up-regulation of the activity of kinases such as PKC via binding to KRT1. Together with KRT1 and RACK1, serves as a platform for SRC activation or inactivation. Plays a mechanistic adhesive role during telophase, required for the successful completion of cytokinesis. ITGA4:ITGB1 binds to fractalkine (CX3CL1) and may act as its coreceptor in CX3CR1-dependent fractalkine signaling. ITGA4:ITGB1 and ITGA5:ITGB1 bind to PLA2G2A via a site (site 2) which is distinct from the classical ligand-binding site (site 1) and this induces integrin conformational changes and enhanced ligand binding to site 1. ITGA5:ITGB1 acts as a receptor for fibrillin-1 (FBN1) and mediates R-G-D-dependent cell adhesion to FBN1. ITGA5:ITGB1 is a receptor for IL1B and binding is essential for IL1B signaling. ITGA5:ITGB3 is a receptor for soluble CD40LG and is required for CD40/CD40LG signaling. Plays an important role in myoblast differentiation and fusion during skeletal myogenesis. ITGA9:ITGB1 may play a crucial role in SVEP1/polydom-mediated myoblast cell adhesion. Integrins ITGA9:ITGB1 and ITGA4:ITGB1 repress PRKCA-mediated L-type voltage-gated channel Ca(2+) influx and ROCK-mediated calcium sensitivity in vascular smooth muscle cells via their interaction with SVEP1, thereby inhibit vasocontraction. The sequence is that of Integrin beta-1 (Itgb1) from Rattus norvegicus (Rat).